Consider the following 321-residue polypeptide: Transmembrane protein 255A (321 aa).

Helical transmembrane passes span 29–49, 56–76, 88–108, and 200–220; these read VFVT…GMAA, VTVG…LGII, LVAS…CAIV, and TILN…LGGF. Over residues 279–297 the composition is skewed to polar residues; the sequence is STPSGLSDDPNGQASSFMW. The disordered stretch occupies residues 279-300; the sequence is STPSGLSDDPNGQASSFMWPSN.

The protein belongs to the TMEM255 family.

The protein resides in the membrane. This is Transmembrane protein 255A (tmem255a) from Xenopus laevis (African clawed frog).